The following is a 262-amino-acid chain: Hydroxyethylthiazole kinase (262 aa).

Residue Met-50 participates in substrate binding. ATP contacts are provided by Arg-125 and Thr-171. Gly-198 lines the substrate pocket.

Belongs to the Thz kinase family. Requires Mg(2+) as cofactor.

It carries out the reaction 5-(2-hydroxyethyl)-4-methylthiazole + ATP = 4-methyl-5-(2-phosphooxyethyl)-thiazole + ADP + H(+). It participates in cofactor biosynthesis; thiamine diphosphate biosynthesis; 4-methyl-5-(2-phosphoethyl)-thiazole from 5-(2-hydroxyethyl)-4-methylthiazole: step 1/1. Its function is as follows. Catalyzes the phosphorylation of the hydroxyl group of 4-methyl-5-beta-hydroxyethylthiazole (THZ). The protein is Hydroxyethylthiazole kinase of Shigella flexneri serotype 5b (strain 8401).